We begin with the raw amino-acid sequence, 99 residues long: UPF0751 protein BCAH820_B0138 (99 aa).

Belongs to the UPF0751 family.

This chain is UPF0751 protein BCAH820_B0138, found in Bacillus cereus (strain AH820).